The following is a 295-amino-acid chain: SPX domain-containing protein 1 (295 aa).

One can recognise an SPX domain in the interval 1 to 166 (MKFGKSLSSQ…GALIRLPFIQ (166 aa)). Residues 197-227 (NELPVSSEDGRGDSTNEDKPSNPSSSLVNGG) form a disordered region. Residues 204-216 (EDGRGDSTNEDKP) show a composition bias toward basic and acidic residues.

As to quaternary structure, interacts (via SPX domain) with PHR2 (via C-terminus). Interacts with RLI1 in the nucleus to prevents its positive regulation of leaf inclination during phosphate (Pi) starvation.

Its subcellular location is the nucleus. In terms of biological role, involved in plant adaptation to phosphate (Pi) starvation. Inhibits PHR2 DNA-binding activity via a Pi-dependent protein interaction. Suppresses the regulation on expression of PT2 by PHR2 and accumulation of shoot Pi. Optimizes growth under phosphate-limited conditions through a negative feedback loop of the PSI (phosphate starvation-induced) signaling pathway. Regulates the expression of SPX2, SPX3 and SPX5. May be an important link between signal transduction pathways related to phosphate starvation and cold stress. Together with SPX2, plays a negative role in the regulation of leaf inclination by preventing RLI1 transcription factor activity in Pi depleted conditions. This is SPX domain-containing protein 1 from Oryza sativa subsp. indica (Rice).